The chain runs to 286 residues: Pyridoxal kinase PdxY (286 aa).

Substrate contacts are provided by residues Ser-9 and 44–45 (TQ). ATP-binding positions include Asp-111, Ala-143, Glu-148, Lys-181, and 208 to 211 (RPLV). Asp-223 is a substrate binding site.

This sequence belongs to the pyridoxine kinase family. PdxY subfamily. Homodimer. Mg(2+) serves as cofactor.

The catalysed reaction is pyridoxal + ATP = pyridoxal 5'-phosphate + ADP + H(+). It functions in the pathway cofactor metabolism; pyridoxal 5'-phosphate salvage; pyridoxal 5'-phosphate from pyridoxal: step 1/1. Its function is as follows. Pyridoxal kinase involved in the salvage pathway of pyridoxal 5'-phosphate (PLP). Catalyzes the phosphorylation of pyridoxal to PLP. The chain is Pyridoxal kinase PdxY from Yersinia pseudotuberculosis serotype I (strain IP32953).